Reading from the N-terminus, the 300-residue chain is UDP-N-acetylenolpyruvoylglucosamine reductase (300 aa).

The region spanning R30–D194 is the FAD-binding PCMH-type domain. R174 is a catalytic residue. The active-site Proton donor is S223. E293 is a catalytic residue.

The protein belongs to the MurB family. FAD is required as a cofactor.

Its subcellular location is the cytoplasm. It carries out the reaction UDP-N-acetyl-alpha-D-muramate + NADP(+) = UDP-N-acetyl-3-O-(1-carboxyvinyl)-alpha-D-glucosamine + NADPH + H(+). The protein operates within cell wall biogenesis; peptidoglycan biosynthesis. In terms of biological role, cell wall formation. This is UDP-N-acetylenolpyruvoylglucosamine reductase from Geobacter sulfurreducens (strain ATCC 51573 / DSM 12127 / PCA).